The following is a 549-amino-acid chain: Lysine-specific demethylase JMJ31 (549 aa).

The region spanning 125–296 is the JmjC domain; sequence DYRPGQIYLA…SNMPEHMDSY (172 aa). H184, D186, and H266 together coordinate Fe cation.

This sequence belongs to the JARID1 histone demethylase family. It depends on Fe(2+) as a cofactor. As to expression, mostly expressed in leaves and inflorescences, and, to a lower extent, in roots, siliques and stems.

The protein localises to the nucleus. In terms of biological role, may function as histone H3 lysine demethylase and be involved in regulation of gene expression. The sequence is that of Lysine-specific demethylase JMJ31 from Arabidopsis thaliana (Mouse-ear cress).